Reading from the N-terminus, the 266-residue chain is tRNA pseudouridine synthase A (266 aa).

The active-site Nucleophile is Asp-57. Tyr-115 contacts substrate.

Belongs to the tRNA pseudouridine synthase TruA family. In terms of assembly, homodimer.

The enzyme catalyses uridine(38/39/40) in tRNA = pseudouridine(38/39/40) in tRNA. In terms of biological role, formation of pseudouridine at positions 38, 39 and 40 in the anticodon stem and loop of transfer RNAs. The chain is tRNA pseudouridine synthase A from Buchnera aphidicola subsp. Acyrthosiphon pisum (strain APS) (Acyrthosiphon pisum symbiotic bacterium).